Here is a 142-residue protein sequence, read N- to C-terminus: Hemoglobin subunit alpha-C (142 aa).

At alanine 2 the chain carries N-acetylalanine. The region spanning 2–142 (ALNCDDKAHI…VSGLLTSKYR (141 aa)) is the Globin domain. Histidine 59 is a binding site for O2. Histidine 88 contributes to the heme b binding site.

The protein belongs to the globin family. In terms of assembly, heterotetramer of either two alpha-B chains or two alpha-C chains and two beta chains. The two major hemoglobins, B and C, associate upon deoxygenation to form a trimer of tetramers, BC2, that has a much lower affinity for oxygen than either component alone. Red blood cells.

In terms of biological role, the alpha-C chain is a component of adult hemoglobin C. The polypeptide is Hemoglobin subunit alpha-C (Aquarana catesbeiana (American bullfrog)).